The primary structure comprises 1399 residues: DNA-directed RNA polymerase subunit beta' (1399 aa).

Zn(2+)-binding residues include cysteine 70, cysteine 72, cysteine 85, and cysteine 88. Aspartate 460, aspartate 462, and aspartate 464 together coordinate Mg(2+). The Zn(2+) site is built by cysteine 814, cysteine 888, cysteine 895, and cysteine 898. Residues 1367–1399 (SERKRQRDLGKPQRVSASEAEAALTEALNSSGN) form a disordered region. A compositionally biased stretch (low complexity) spans 1382–1399 (SASEAEAALTEALNSSGN).

It belongs to the RNA polymerase beta' chain family. As to quaternary structure, the RNAP catalytic core consists of 2 alpha, 1 beta, 1 beta' and 1 omega subunit. When a sigma factor is associated with the core the holoenzyme is formed, which can initiate transcription. Mg(2+) is required as a cofactor. Requires Zn(2+) as cofactor.

It carries out the reaction RNA(n) + a ribonucleoside 5'-triphosphate = RNA(n+1) + diphosphate. In terms of biological role, DNA-dependent RNA polymerase catalyzes the transcription of DNA into RNA using the four ribonucleoside triphosphates as substrates. In Pseudomonas paraeruginosa (strain DSM 24068 / PA7) (Pseudomonas aeruginosa (strain PA7)), this protein is DNA-directed RNA polymerase subunit beta'.